Consider the following 157-residue polypeptide: DNA gyrase inhibitor (157 aa).

The protein belongs to the DNA gyrase inhibitor family. Interacts with DNA gyrase.

The protein localises to the cytoplasm. Its function is as follows. Inhibits the supercoiling activity of DNA gyrase. Acts by inhibiting DNA gyrase at an early step, prior to (or at the step of) binding of DNA by the gyrase. It protects cells against toxins that target DNA gyrase, by inhibiting activity of these toxins and reducing the formation of lethal double-strand breaks in the cell. This Cronobacter sakazakii (strain ATCC BAA-894) (Enterobacter sakazakii) protein is DNA gyrase inhibitor.